The following is a 367-amino-acid chain: Glutamate 5-kinase (367 aa).

Residue Lys-8 participates in ATP binding. Substrate-binding residues include Ser-49, Asp-136, and Asn-148. Residues Thr-168–Asp-169 and Thr-210–Lys-216 contribute to the ATP site. Residues Thr-275 to Glu-353 enclose the PUA domain.

Belongs to the glutamate 5-kinase family.

It is found in the cytoplasm. The catalysed reaction is L-glutamate + ATP = L-glutamyl 5-phosphate + ADP. It participates in amino-acid biosynthesis; L-proline biosynthesis; L-glutamate 5-semialdehyde from L-glutamate: step 1/2. Catalyzes the transfer of a phosphate group to glutamate to form L-glutamate 5-phosphate. In Synechococcus elongatus (strain ATCC 33912 / PCC 7942 / FACHB-805) (Anacystis nidulans R2), this protein is Glutamate 5-kinase.